The primary structure comprises 213 residues: Glycerol-3-phosphate acyltransferase (213 aa).

Helical transmembrane passes span 3–23, 51–71, 78–98, 115–135, and 140–160; these read ILLA…VVVS, KAAI…VWLA, DVAI…PVFF, AVHP…AFFF, and LAAL…FGMP.

This sequence belongs to the PlsY family. In terms of assembly, probably interacts with PlsX.

The protein localises to the cell inner membrane. The enzyme catalyses an acyl phosphate + sn-glycerol 3-phosphate = a 1-acyl-sn-glycero-3-phosphate + phosphate. It participates in lipid metabolism; phospholipid metabolism. In terms of biological role, catalyzes the transfer of an acyl group from acyl-phosphate (acyl-PO(4)) to glycerol-3-phosphate (G3P) to form lysophosphatidic acid (LPA). This enzyme utilizes acyl-phosphate as fatty acyl donor, but not acyl-CoA or acyl-ACP. The sequence is that of Glycerol-3-phosphate acyltransferase from Burkholderia cenocepacia (strain HI2424).